The following is a 60-amino-acid chain: Large ribosomal subunit protein uL30 (60 aa).

Belongs to the universal ribosomal protein uL30 family. Part of the 50S ribosomal subunit.

This is Large ribosomal subunit protein uL30 from Ralstonia pickettii (strain 12J).